A 499-amino-acid chain; its full sequence is Calcium/calmodulin-dependent protein kinase type II subunit delta (499 aa).

Alanine 2 carries the post-translational modification N-acetylalanine. The Protein kinase domain maps to 14–272 (YQLFEELGKG…ASEALKHPWI (259 aa)). ATP contacts are provided by residues 20 to 28 (LGKGAFSVV) and lysine 43. The active-site Proton acceptor is the aspartate 136. Positions 283-292 (HRQETVDCLK) are autoinhibitory domain. Position 287 is a phosphothreonine; by autocatalysis (threonine 287). The tract at residues 291-301 (LKKFNARRKLK) is calmodulin-binding. Residues threonine 306 and threonine 307 each carry the phosphothreonine; by autocatalysis modification. Phosphoserine is present on serine 315. Lysine 318 bears the N6-acetyllysine mark. Phosphoserine is present on residues serine 319 and serine 330. A Phosphothreonine modification is found at threonine 331. Serine 333 is subject to Phosphoserine. 2 positions are modified to phosphothreonine: threonine 336 and threonine 337. A phosphoserine mark is found at serine 404, serine 490, and serine 494.

It belongs to the protein kinase superfamily. CAMK Ser/Thr protein kinase family. CaMK subfamily. In terms of assembly, CAMK2 is composed of 4 different chains: alpha (CAMK2A), beta (CAMK2B), gamma (CAMK2G), and delta (CAMK2D). The different isoforms assemble into homo- or heteromultimeric holoenzymes composed of 12 subunits with two hexameric rings stacked one on top of the other. Interacts with RRAD CACNB2. In terms of processing, autophosphorylation of Thr-287 following activation by Ca(2+)/calmodulin. Phosphorylation of Thr-287 locks the kinase into an activated state.

It localises to the cell membrane. Its subcellular location is the sarcolemma. The protein localises to the sarcoplasmic reticulum membrane. It carries out the reaction L-seryl-[protein] + ATP = O-phospho-L-seryl-[protein] + ADP + H(+). It catalyses the reaction L-threonyl-[protein] + ATP = O-phospho-L-threonyl-[protein] + ADP + H(+). Activated by Ca(2+)/calmodulin. Binding of calmodulin results in conformational change that relieves intrasteric autoinhibition and allows autophosphorylation of Thr-287 which turns the kinase in a constitutively active form and confers to the kinase a Ca(2+)-independent activity. In terms of biological role, calcium/calmodulin-dependent protein kinase involved in the regulation of Ca(2+) homeostatis and excitation-contraction coupling (ECC) in heart by targeting ion channels, transporters and accessory proteins involved in Ca(2+) influx into the myocyte, Ca(2+) release from the sarcoplasmic reticulum (SR), SR Ca(2+) uptake and Na(+) and K(+) channel transport. Targets also transcription factors and signaling molecules to regulate heart function. In its activated form, is involved in the pathogenesis of dilated cardiomyopathy and heart failure. Contributes to cardiac decompensation and heart failure by regulating SR Ca(2+) release via direct phosphorylation of RYR2 Ca(2+) channel on 'Ser-2808'. In the nucleus, phosphorylates the MEF2 repressor HDAC4, promoting its nuclear export and binding to 14-3-3 protein, and expression of MEF2 and genes involved in the hypertrophic program. Is essential for left ventricular remodeling responses to myocardial infarction. In pathological myocardial remodeling acts downstream of the beta adrenergic receptor signaling cascade to regulate key proteins involved in ECC. Regulates Ca(2+) influx to myocytes by binding and phosphorylating the L-type Ca(2+) channel subunit beta-2 CACNB2. In addition to Ca(2+) channels, can target and regulate the cardiac sarcolemmal Na(+) channel Nav1.5/SCN5A and the K+ channel Kv4.3/KCND3, which contribute to arrhythmogenesis in heart failure. Phosphorylates phospholamban (PLN/PLB), an endogenous inhibitor of SERCA2A/ATP2A2, contributing to the enhancement of SR Ca(2+) uptake that may be important in frequency-dependent acceleration of relaxation (FDAR) and maintenance of contractile function during acidosis. May participate in the modulation of skeletal muscle function in response to exercise, by regulating SR Ca(2+) transport through phosphorylation of PLN/PLB and triadin, a ryanodine receptor-coupling factor. In response to interferon-gamma (IFN-gamma) stimulation, catalyzes phosphorylation of STAT1, stimulating the JAK-STAT signaling pathway. This Sus scrofa (Pig) protein is Calcium/calmodulin-dependent protein kinase type II subunit delta (CAMK2D).